The primary structure comprises 238 residues: UPF0758 protein Ajs_3450 (238 aa).

The region spanning 116-238 (VFDSPQAVQH…ALSMAEQGLV (123 aa)) is the MPN domain. The Zn(2+) site is built by H187, H189, and D200. The JAMM motif signature appears at 187–200 (HNHPSGSVQPSRAD).

Belongs to the UPF0758 family.

The chain is UPF0758 protein Ajs_3450 from Acidovorax sp. (strain JS42).